We begin with the raw amino-acid sequence, 220 residues long: Octanoyltransferase (220 aa).

A BPL/LPL catalytic domain is found at 31 to 217 (ENTPDEIWLV…HFAEILGYNA (187 aa)). Residues 70-77 (RGGQITYH), 146-148 (SLG), and 159-161 (GLA) contribute to the substrate site. Cys-177 serves as the catalytic Acyl-thioester intermediate.

It belongs to the LipB family.

The protein resides in the cytoplasm. It carries out the reaction octanoyl-[ACP] + L-lysyl-[protein] = N(6)-octanoyl-L-lysyl-[protein] + holo-[ACP] + H(+). Its pathway is protein modification; protein lipoylation via endogenous pathway; protein N(6)-(lipoyl)lysine from octanoyl-[acyl-carrier-protein]: step 1/2. Its function is as follows. Catalyzes the transfer of endogenously produced octanoic acid from octanoyl-acyl-carrier-protein onto the lipoyl domains of lipoate-dependent enzymes. Lipoyl-ACP can also act as a substrate although octanoyl-ACP is likely to be the physiological substrate. The polypeptide is Octanoyltransferase (Actinobacillus succinogenes (strain ATCC 55618 / DSM 22257 / CCUG 43843 / 130Z)).